Here is a 1029-residue protein sequence, read N- to C-terminus: Chitin synthase 2 (1029 aa).

3 disordered regions span residues 1–160 (MDRP…GARS), 174–216 (SDVD…SHLR), and 234–257 (AHYGPAPAEGDQQRRGVREPQKSR). A compositionally biased stretch (low complexity) spans 61-77 (PSVSSIHSRPSSISNIP). The span at 244 to 257 (DQQRRGVREPQKSR) shows a compositional bias: basic and acidic residues. Asparagine 348 carries N-linked (GlcNAc...) asparagine glycosylation. Helical transmembrane passes span 639 to 659 (WLNGAFFAAIYSLVHFRQLWA), 681 to 701 (VLFTFFSLANFYLTFYFVAGG), 716 to 736 (LYIFTILRYTLILLICAQFIL), 752 to 772 (SMVIYGIVMVYTTFAAFYIVI), 791 to 811 (NLIVSMASTIGLYFLMSFIYL), 820 to 840 (SIQYFMLLPSYLCTLQVYAFC), 918 to 938 (YMVVSWMIANGILGMAVSEIY), and 952 to 972 (ILWSVASLALFRALGSTTFAI).

The protein belongs to the chitin synthase family. Class II subfamily.

The protein resides in the cell membrane. It catalyses the reaction [(1-&gt;4)-N-acetyl-beta-D-glucosaminyl](n) + UDP-N-acetyl-alpha-D-glucosamine = [(1-&gt;4)-N-acetyl-beta-D-glucosaminyl](n+1) + UDP + H(+). Polymerizes chitin, a structural polymer of the cell wall and septum, by transferring the sugar moiety of UDP-GlcNAc to the non-reducing end of the growing chitin polymer. Plays an important role in cell wall integrity and has distinct functions in invasive hyphae and vegetative hyphae, but is not involved in plant infection. This is Chitin synthase 2 from Pyricularia oryzae (strain 70-15 / ATCC MYA-4617 / FGSC 8958) (Rice blast fungus).